A 257-amino-acid polypeptide reads, in one-letter code: Indole-3-glycerol phosphate synthase (257 aa).

Belongs to the TrpC family.

The enzyme catalyses 1-(2-carboxyphenylamino)-1-deoxy-D-ribulose 5-phosphate + H(+) = (1S,2R)-1-C-(indol-3-yl)glycerol 3-phosphate + CO2 + H2O. It functions in the pathway amino-acid biosynthesis; L-tryptophan biosynthesis; L-tryptophan from chorismate: step 4/5. The sequence is that of Indole-3-glycerol phosphate synthase from Chlorobium chlorochromatii (strain CaD3).